Here is a 167-residue protein sequence, read N- to C-terminus: Zinc finger CCCH domain-containing protein 3 (167 aa).

The C3H1-type zinc finger occupies 63 to 91; sequence AAAIGVCQHFVRTGTCKFGDSCRYFHPKP. The span at 89–101 shows a compositional bias: pro residues; it reads PKPPPANPGPAPS. The interval 89 to 167 is disordered; the sequence is PKPPPANPGP…YPPFPFVDWG (79 aa). Residues 108 to 120 show a composition bias toward polar residues; sequence MAQQSNIQGSQPN. Residues 149-167 are compositionally biased toward pro residues; it reads SLRPPPEGGYPPFPFVDWG.

This chain is Zinc finger CCCH domain-containing protein 3, found in Oryza sativa subsp. japonica (Rice).